The sequence spans 177 residues: UPF0102 protein BPP4042 (177 aa).

Positions 13 to 43 are disordered; sequence AAQAQRRLHRRPPASPRASPGARDGGSPTQR.

The protein belongs to the UPF0102 family.

The chain is UPF0102 protein BPP4042 from Bordetella parapertussis (strain 12822 / ATCC BAA-587 / NCTC 13253).